Consider the following 79-residue polypeptide: Putative defensin-like protein 80 (79 aa).

Residues 1–26 form the signal peptide; the sequence is MDVQRSSYIFIALSIIAMFLITGVKP. 4 disulfide bridges follow: C32-C65, C36-C58, C44-C63, and C48-C64.

This sequence belongs to the DEFL family.

The protein resides in the secreted. This is Putative defensin-like protein 80 (LCR81) from Arabidopsis thaliana (Mouse-ear cress).